The following is a 153-amino-acid chain: Hsp90 co-chaperone HCH1 (153 aa).

The protein belongs to the AHA1 family. Monomer. Interacts with HSP82.

The protein resides in the cytoplasm. It is found in the nucleus. Functionally, co-chaperone that binds to the molecular chaperone HSP82 and stimulates its ATPase activity. Although not essential, it confers thermotolerance when intracellular levels of HSP82 are limiting. The protein is Hsp90 co-chaperone HCH1 (HCH1) of Saccharomyces cerevisiae (strain ATCC 204508 / S288c) (Baker's yeast).